A 338-amino-acid chain; its full sequence is Methionyl-tRNA formyltransferase (338 aa).

110 to 113 (SLLP) contacts (6S)-5,6,7,8-tetrahydrofolate.

Belongs to the Fmt family.

It catalyses the reaction L-methionyl-tRNA(fMet) + (6R)-10-formyltetrahydrofolate = N-formyl-L-methionyl-tRNA(fMet) + (6S)-5,6,7,8-tetrahydrofolate + H(+). In terms of biological role, attaches a formyl group to the free amino group of methionyl-tRNA(fMet). The formyl group appears to play a dual role in the initiator identity of N-formylmethionyl-tRNA by promoting its recognition by IF2 and preventing the misappropriation of this tRNA by the elongation apparatus. The protein is Methionyl-tRNA formyltransferase of Parasynechococcus marenigrum (strain WH8102).